The following is a 293-amino-acid chain: MTSSYVGRFAPTPSGYLHFGSLVAAVASYLDARAVGGRWLVRMEDLDPPREVPGAQRAILETLERYGFEWDGAVERQSERFPAYASVIEQLLRSGLAYACTCSRKQLEDFAGIYPGFCRDAGHARDDAAIRLRVPELEYRFVDRVQGEVCQHLGREVGDFVIQRRDGLYAYQLAVVLDDAWQGITDIVRGADLLDSTPRQLYLQELLGLSQPRYLHVPLIVQPDGHKLGKSYRSPPLPAEQAAVPLTRALRALGQRPPAELAEGSAGEALAWGVAHWDATRIPRRATLPEESL.

L-glutamate-binding positions include 8–12 (RFAPT) and Glu44. A 'HIGH' region motif is present at residues 11–21 (PTPSGYLHFGS). 4 residues coordinate Zn(2+): Cys100, Cys102, Tyr114, and Cys118. L-glutamate contacts are provided by Tyr171 and Arg189. The short motif at 227–231 (KLGKS) is the 'KMSKS' region element. Lys230 provides a ligand contact to ATP.

Belongs to the class-I aminoacyl-tRNA synthetase family. GluQ subfamily. Requires Zn(2+) as cofactor.

Its function is as follows. Catalyzes the tRNA-independent activation of glutamate in presence of ATP and the subsequent transfer of glutamate onto a tRNA(Asp). Glutamate is transferred on the 2-amino-5-(4,5-dihydroxy-2-cyclopenten-1-yl) moiety of the queuosine in the wobble position of the QUC anticodon. In Pseudomonas paraeruginosa (strain DSM 24068 / PA7) (Pseudomonas aeruginosa (strain PA7)), this protein is Glutamyl-Q tRNA(Asp) synthetase.